Consider the following 355-residue polypeptide: Tryptophan--tRNA ligase (355 aa).

Residues Gln13–Thr15 and Gly21–Asn22 contribute to the ATP site. A 'HIGH' region motif is present at residues Pro14–Asn22. Asp137 lines the L-tryptophan pocket. Residues Gly149–Asp151, Ile208, and Lys217–Ser221 each bind ATP. The short motif at Lys217–Ser221 is the 'KMSKS' region element.

It belongs to the class-I aminoacyl-tRNA synthetase family. In terms of assembly, homodimer.

Its subcellular location is the cytoplasm. The catalysed reaction is tRNA(Trp) + L-tryptophan + ATP = L-tryptophyl-tRNA(Trp) + AMP + diphosphate + H(+). Functionally, catalyzes the attachment of tryptophan to tRNA(Trp). The chain is Tryptophan--tRNA ligase from Brucella melitensis biotype 1 (strain ATCC 23456 / CCUG 17765 / NCTC 10094 / 16M).